The following is a 591-amino-acid chain: CTP synthase 1-A (591 aa).

The 255-residue stretch at 300–554 (SIALVGKYTK…LASVGRLSQY (255 aa)) folds into the Glutamine amidotransferase type-1 domain. Catalysis depends on for GATase activity residues C399, H526, and E528.

This sequence belongs to the CTP synthase family.

The catalysed reaction is UTP + L-glutamine + ATP + H2O = CTP + L-glutamate + ADP + phosphate + 2 H(+). Its pathway is pyrimidine metabolism; CTP biosynthesis via de novo pathway; CTP from UDP: step 2/2. This enzyme is involved in the de novo synthesis of CTP, a precursor of DNA, RNA and phospholipids. Catalyzes the ATP-dependent amination of UTP to CTP with either L-glutamine or ammonia as a source of nitrogen. The sequence is that of CTP synthase 1-A (ctps1-a) from Xenopus laevis (African clawed frog).